A 466-amino-acid chain; its full sequence is Argininosuccinate lyase (466 aa).

This sequence belongs to the lyase 1 family. Argininosuccinate lyase subfamily.

It is found in the cytoplasm. The catalysed reaction is 2-(N(omega)-L-arginino)succinate = fumarate + L-arginine. It functions in the pathway amino-acid biosynthesis; L-arginine biosynthesis; L-arginine from L-ornithine and carbamoyl phosphate: step 3/3. This is Argininosuccinate lyase from Syntrophobacter fumaroxidans (strain DSM 10017 / MPOB).